The chain runs to 170 residues: Bifunctional protein PyrR (170 aa).

The PRPP-binding signature appears at 90-102; it reads LVLVDDVLMSGRT.

Belongs to the purine/pyrimidine phosphoribosyltransferase family. PyrR subfamily.

It carries out the reaction UMP + diphosphate = 5-phospho-alpha-D-ribose 1-diphosphate + uracil. Its function is as follows. Regulates the transcription of the pyrimidine nucleotide (pyr) operon in response to exogenous pyrimidines. Also displays a weak uracil phosphoribosyltransferase activity which is not physiologically significant. In Pseudomonas paraeruginosa (strain DSM 24068 / PA7) (Pseudomonas aeruginosa (strain PA7)), this protein is Bifunctional protein PyrR.